A 139-amino-acid polypeptide reads, in one-letter code: Putative nickel-responsive regulator (139 aa).

Ni(2+) contacts are provided by His-79, His-90, His-92, and Cys-98.

This sequence belongs to the transcriptional regulatory CopG/NikR family. Ni(2+) serves as cofactor.

In terms of biological role, transcriptional regulator. In Geobacter metallireducens (strain ATCC 53774 / DSM 7210 / GS-15), this protein is Putative nickel-responsive regulator.